The following is a 391-amino-acid chain: MSIVRMTDLALSGKRVLIRQDLNVPIDQGRITSEQRIIASLPTIRVALERGAAVMVTSHLGRPKEGVWSEEDSLAPVAKRLSQLLGIEVPLRRDWVDGVQVAPGQLVLLENCRMNVGEAENDEALARKYAALCDVFVMDAFGTAHRAQASTHGVICCAAIAAGGPLLMAELDALSRGLEHPVKPLLAIVGGSKVSTKLELLSNLVNNVEQLITGGGIANTFLAAAGYSIGKSLYEGDLIETAREIITAAKARGAEIPLPTDVVVAKQFLPGVTATVKTVDAIVADDLILDIGPQTARHYAALIETAATVVWNGPVGVFEFDAFSKGTEVLARAVAASSAFSIAGGGDTLAAIDKYGVADQISYISTGGGAFLEFLEGKTLPAVAALQARSG.

Substrate contacts are provided by residues 21-23 (DLN), Arg-36, 59-62 (HLGR), Arg-113, and Arg-146. ATP is bound by residues Lys-197, Glu-319, and 345 to 348 (GGDT).

It belongs to the phosphoglycerate kinase family. As to quaternary structure, monomer.

It is found in the cytoplasm. The catalysed reaction is (2R)-3-phosphoglycerate + ATP = (2R)-3-phospho-glyceroyl phosphate + ADP. It participates in carbohydrate degradation; glycolysis; pyruvate from D-glyceraldehyde 3-phosphate: step 2/5. The polypeptide is Phosphoglycerate kinase (Xylella fastidiosa (strain 9a5c)).